The sequence spans 244 residues: Protein crossbronx (244 aa).

The UBC core domain occupies 20–176; that stretch reads QQEYKILAEY…VLENIKESKE (157 aa).

The protein belongs to the ubiquitin-conjugating enzyme family. FTS subfamily.

The polypeptide is Protein crossbronx (cbx) (Drosophila persimilis (Fruit fly)).